The sequence spans 330 residues: Phenylalanine--tRNA ligase alpha subunit (330 aa).

Glutamate 257 provides a ligand contact to Mg(2+).

It belongs to the class-II aminoacyl-tRNA synthetase family. Phe-tRNA synthetase alpha subunit type 1 subfamily. In terms of assembly, tetramer of two alpha and two beta subunits. Mg(2+) is required as a cofactor.

Its subcellular location is the cytoplasm. The enzyme catalyses tRNA(Phe) + L-phenylalanine + ATP = L-phenylalanyl-tRNA(Phe) + AMP + diphosphate + H(+). This is Phenylalanine--tRNA ligase alpha subunit from Acaryochloris marina (strain MBIC 11017).